Reading from the N-terminus, the 234-residue chain is uncharacterized protein (234 aa).

A disordered region spans residues 199 to 234; that stretch reads DNQNEPLENYSDDNNFSNFDETEHVDDSEMNDDNFI.

This is an uncharacterized protein from Buchnera aphidicola subsp. Schizaphis graminum (strain Sg).